The primary structure comprises 349 residues: DNA integrity scanning protein DisA (349 aa).

A DAC domain is found at 3–143; sequence KQDLMDIIVK…LKYRLKNFDE (141 aa). ATP contacts are provided by residues glycine 70, valine 88, and 101-105; that span reads TRHRT.

This sequence belongs to the DisA family. As to quaternary structure, homooctamer. The cofactor is Mg(2+).

The catalysed reaction is 2 ATP = 3',3'-c-di-AMP + 2 diphosphate. In terms of biological role, participates in a DNA-damage check-point. DisA forms globular foci that rapidly scan along the chromosomes searching for lesions. Its function is as follows. Also has diadenylate cyclase activity, catalyzing the condensation of 2 ATP molecules into cyclic di-AMP (c-di-AMP). c-di-AMP likely acts as a signaling molecule that may couple DNA integrity with a cellular process. This is DNA integrity scanning protein DisA from Fusobacterium nucleatum subsp. nucleatum (strain ATCC 25586 / DSM 15643 / BCRC 10681 / CIP 101130 / JCM 8532 / KCTC 2640 / LMG 13131 / VPI 4355).